A 105-amino-acid polypeptide reads, in one-letter code: UPF0145 protein AHA_2580 (105 aa).

This sequence belongs to the UPF0145 family.

This Aeromonas hydrophila subsp. hydrophila (strain ATCC 7966 / DSM 30187 / BCRC 13018 / CCUG 14551 / JCM 1027 / KCTC 2358 / NCIMB 9240 / NCTC 8049) protein is UPF0145 protein AHA_2580.